Reading from the N-terminus, the 106-residue chain is Iron-sulfur cluster assembly protein CyaY (106 aa).

Belongs to the frataxin family.

In terms of biological role, involved in iron-sulfur (Fe-S) cluster assembly. May act as a regulator of Fe-S biogenesis. This Salmonella heidelberg (strain SL476) protein is Iron-sulfur cluster assembly protein CyaY.